We begin with the raw amino-acid sequence, 214 residues long: Potassium/proton antiporter CemA (214 aa).

2 helical membrane-spanning segments follow: residues 92–112 (ILHL…SILG) and 174–194 (IISG…KYWI).

Belongs to the CemA family.

It localises to the plastid. Its subcellular location is the chloroplast inner membrane. The enzyme catalyses K(+)(in) + H(+)(out) = K(+)(out) + H(+)(in). Functionally, contributes to K(+)/H(+) antiport activity by supporting proton efflux to control proton extrusion and homeostasis in chloroplasts in a light-dependent manner to modulate photosynthesis. Prevents excessive induction of non-photochemical quenching (NPQ) under continuous-light conditions. Indirectly promotes efficient inorganic carbon uptake into chloroplasts. In Oenothera argillicola (Appalachian evening primrose), this protein is Potassium/proton antiporter CemA.